The sequence spans 359 residues: Nicotinate-nucleotide--dimethylbenzimidazole phosphoribosyltransferase (359 aa).

Glutamate 318 functions as the Proton acceptor in the catalytic mechanism.

It belongs to the CobT family. As to quaternary structure, homodimer.

The enzyme catalyses 5,6-dimethylbenzimidazole + nicotinate beta-D-ribonucleotide = alpha-ribazole 5'-phosphate + nicotinate + H(+). It functions in the pathway nucleoside biosynthesis; alpha-ribazole biosynthesis; alpha-ribazole from 5,6-dimethylbenzimidazole: step 1/2. In terms of biological role, catalyzes the synthesis of alpha-ribazole-5'-phosphate from nicotinate mononucleotide (NAMN) and 5,6-dimethylbenzimidazole (DMB). The chain is Nicotinate-nucleotide--dimethylbenzimidazole phosphoribosyltransferase from Escherichia coli O81 (strain ED1a).